Here is a 170-residue protein sequence, read N- to C-terminus: Photosystem II extrinsic protein V (170 aa).

The N-terminal stretch at 1-33 (MASLFSTLQRSLKGLLILVPVLIGLVLASPAEA) is a signal peptide. Heme c contacts are provided by cysteine 70, cysteine 73, histidine 74, and methionine 137.

This sequence belongs to the cytochrome c family. PsbV subfamily. As to quaternary structure, PSII is composed of 1 copy each of membrane proteins PsbA, PsbB, PsbC, PsbD, PsbE, PsbF, PsbH, PsbI, PsbJ, PsbK, PsbL, PsbM, PsbT, PsbX, PsbY, PsbZ, Psb30/Ycf12, peripheral proteins PsbO, CyanoQ (PsbQ), PsbU, PsbV and a large number of cofactors. It forms dimeric complexes. The cofactor is heme c.

It localises to the cellular thylakoid membrane. Its function is as follows. One of the extrinsic, lumenal subunits of photosystem II (PSII). PSII is a light-driven water plastoquinone oxidoreductase, using light energy to abstract electrons from H(2)O, generating a proton gradient subsequently used for ATP formation. The extrinsic proteins stabilize the structure of photosystem II oxygen-evolving complex (OEC), the ion environment of oxygen evolution and protect the OEC against heat-induced inactivation. Low-potential cytochrome c that plays a role in the OEC of PSII. In Parasynechococcus marenigrum (strain WH8102), this protein is Photosystem II extrinsic protein V.